The sequence spans 254 residues: Protein U52 (254 aa).

The protein belongs to the herpesviridae UL79 family.

The protein is Protein U52 (U52) of Homo sapiens (Human).